We begin with the raw amino-acid sequence, 204 residues long: MNSVVLQLSVVCLGVSSQQITDSQRLFSIAVNRVTHLYLLAQRLFSDFESSLQTEEQRQLNKIFLQDFCNSDYIISPIDKHETQRSSVLKLLSISYGLVESWEFPSRSLSGGSSLRNQISPRLSELKTGILLLIRANQDEAENYPDTDTLQHAPYGNYYQSLGGNESLRQTYELLACFKKDMHKVETYLTVAKCRLSPEANCTL.

Residues M1–S17 form the signal peptide. Q18 is subject to Pyrrolidone carboxylic acid. Residue H36 coordinates Zn(2+). C69 and C177 are disulfide-bonded. Position 186 (E186) interacts with Zn(2+). An intrachain disulfide couples C194 to C202.

It belongs to the somatotropin/prolactin family.

Its subcellular location is the secreted. Functionally, growth hormone plays an important role in growth control and involved in the regulation of several anabolic processes. The sequence is that of Somatotropin (gh) from Oreochromis mossambicus (Mozambique tilapia).